The chain runs to 497 residues: Glucose-6-phosphate isomerase (497 aa).

The active-site Proton donor is the glutamate 350. Catalysis depends on residues histidine 381 and lysine 485.

It belongs to the GPI family.

Its subcellular location is the cytoplasm. The catalysed reaction is alpha-D-glucose 6-phosphate = beta-D-fructose 6-phosphate. It participates in carbohydrate biosynthesis; gluconeogenesis. The protein operates within carbohydrate degradation; glycolysis; D-glyceraldehyde 3-phosphate and glycerone phosphate from D-glucose: step 2/4. Catalyzes the reversible isomerization of glucose-6-phosphate to fructose-6-phosphate. In Legionella pneumophila, this protein is Glucose-6-phosphate isomerase.